The following is a 65-amino-acid chain: Large ribosomal subunit protein uL29 (65 aa).

This sequence belongs to the universal ribosomal protein uL29 family.

This chain is Large ribosomal subunit protein uL29 (rpmC), found in Buchnera aphidicola subsp. Acyrthosiphon pisum (strain APS) (Acyrthosiphon pisum symbiotic bacterium).